Consider the following 88-residue polypeptide: Small ribosomal subunit protein bS20 (88 aa).

Belongs to the bacterial ribosomal protein bS20 family.

In terms of biological role, binds directly to 16S ribosomal RNA. The sequence is that of Small ribosomal subunit protein bS20 from Syntrophomonas wolfei subsp. wolfei (strain DSM 2245B / Goettingen).